A 67-amino-acid polypeptide reads, in one-letter code: Medusin-PT (67 aa).

Positions 1 to 22 are cleaved as a signal peptide; the sequence is MAFLKKSLFLVFFLGFVSLSIC. Residues 23–48 constitute a propeptide that is removed on maturation; that stretch reads EEEKRETDEKENEQEDDREERSEEKR. A disordered region spans residues 25–46; it reads EKRETDEKENEQEDDREERSEE. Acidic residues predominate over residues 31-40; that stretch reads EKENEQEDDR. Leu-66 is modified (leucine amide).

It belongs to the frog skin active peptide (FSAP) family. Medusin subfamily. In terms of processing, in the synthetic mutant medusin-PT1a [T58K], the Leu-50 has been modified in a D-amino acid. In medusin-PT1a, there is an increase in antimicrobial activity, and an increase in hemolytic activity. It is more potent against S.aureus and gains activity against MRSA, E.faecalis, E.coli, P.aeruginosa and C.albicans. There is an important increase in both biofilm inhibition and biofilm eradication. As to expression, expressed by the skin glands.

It localises to the secreted. It is found in the target cell membrane. Its function is as follows. Antimicrobial peptide with activity against Gram-positive bacteria S.epidermidis ATCC 12228 (MIC=50 uM) and S.aureus (MIC=64 ug/ml and MBC=128 ug/ml). Not active against some Gram-positive bacteria (methicillin-resistant S.aureus (MRSA), E.faecalis), Gram-negative bacterium E.coli ATCC 25922 and fungus C.albicans at concentrations up to 100 uM. Can only slightly inhibit the formation of biofilm by S.aureus (minimal biofilm inhibitionconcentration MBIC=512 ug/ml, minimal biofilm eradication concentration MBEC&gt;512 ug/ml). Has an anti-inflammatory effect, since it inhibits the production of the pro-inflammatory cytokines TNF-alpha and IL-1beta. Has high activity of stimulation of insulin release, which may protect the species from being eaten by predators by causing fatal hypoglycemia. Is not cytotoxic to cancer line cells. Shows very low hemolysis on horse erythrocytes and moderate hemolysis on mouse erythrocytes. This Phyllomedusa tarsius (Brownbelly leaf frog) protein is Medusin-PT.